The chain runs to 399 residues: MTLLNPYFGKFGGMYVPQILMPALYQLEKNFVDAKKDSNFQKSFFNYLKNYAGRPTPLTLCNNLTNGTKTRIYLKREDLLHGGAHKTNQVLGQAMLAVKMKKKEIIAETGAGQHGVAAAIASALFNLKCKIYMGYKDIKRQSPNVFRMKLMGAEVVSVESGSGTLKDACNEALRDWSRNYQKSHYMIGTAAGPHPYPTIVKEFQKMIGEEAKKQILEQENRLPDAIIACVGGGSNAIGIFSDFIDEDVNLIGVEPAGQGIETGKHGAPLNHGRTGIYFGMKSHLMQSQEGQIEKSWSISAGLDFPSVGPEHSWLNSIHRAKYVSITDIEALEAFQILSKKEGIIPALESSHALAYALKLMYLDPKKEQVFIVNLSGRGDKDIFTVREILKKTEKKHESL.

Lys-86 carries the post-translational modification N6-(pyridoxal phosphate)lysine.

It belongs to the TrpB family. As to quaternary structure, tetramer of two alpha and two beta chains. Requires pyridoxal 5'-phosphate as cofactor.

It carries out the reaction (1S,2R)-1-C-(indol-3-yl)glycerol 3-phosphate + L-serine = D-glyceraldehyde 3-phosphate + L-tryptophan + H2O. It participates in amino-acid biosynthesis; L-tryptophan biosynthesis; L-tryptophan from chorismate: step 5/5. In terms of biological role, the beta subunit is responsible for the synthesis of L-tryptophan from indole and L-serine. The polypeptide is Tryptophan synthase beta chain (trpB) (Buchnera aphidicola subsp. Schizaphis graminum (strain Sg)).